The following is a 373-amino-acid chain: 3',5'-bisphosphate nucleotidase AHL (373 aa).

Aspartate 52 acts as the Proton acceptor in catalysis. Mg(2+) is bound by residues glutamate 77, aspartate 144, valine 146, and aspartate 147. The active-site Proton acceptor is the threonine 149. Residues threonine 149, serine 281, lysine 284, lysine 298, and aspartate 310 each contribute to the adenosine 3',5'-bisphosphate site. Serine 281, lysine 284, lysine 298, and aspartate 310 together coordinate AMP. Aspartate 310 lines the Mg(2+) pocket.

The protein belongs to the inositol monophosphatase superfamily. Mg(2+) serves as cofactor. As to expression, expressed in roots, leaves, stems, flowers and siliques.

It catalyses the reaction adenosine 3',5'-bisphosphate + H2O = AMP + phosphate. The enzyme catalyses 3'-phosphoadenylyl sulfate + H2O = adenosine 5'-phosphosulfate + phosphate. Its activity is regulated as follows. Inhibited by Li(+) (IC(50)=10 mM), Na(+) (IC(50)=50 mM) and Ca(2+) (IC(50)=0.06 mM). In terms of biological role, phosphatase that converts adenosine 3'-phosphate 5'-phosphosulfate (PAPS) to adenosine 5'-phosphosulfate (APS) and 3'-phosphoadenosine 5'-phosphate (3'-PAP) to AMP. May regulate the flux of sulfur in the sulfur-activation pathway by converting PAPS to APS. Prevents both the toxicity of PAP on RNA processing enzymes as well as the product inhibition by PAP of sulfate conjugation. In Arabidopsis thaliana (Mouse-ear cress), this protein is 3',5'-bisphosphate nucleotidase AHL.